Reading from the N-terminus, the 312-residue chain is Methionyl-tRNA formyltransferase (312 aa).

109 to 112 (SLLP) contacts (6S)-5,6,7,8-tetrahydrofolate.

Belongs to the Fmt family.

It catalyses the reaction L-methionyl-tRNA(fMet) + (6R)-10-formyltetrahydrofolate = N-formyl-L-methionyl-tRNA(fMet) + (6S)-5,6,7,8-tetrahydrofolate + H(+). Attaches a formyl group to the free amino group of methionyl-tRNA(fMet). The formyl group appears to play a dual role in the initiator identity of N-formylmethionyl-tRNA by promoting its recognition by IF2 and preventing the misappropriation of this tRNA by the elongation apparatus. The chain is Methionyl-tRNA formyltransferase from Listeria welshimeri serovar 6b (strain ATCC 35897 / DSM 20650 / CCUG 15529 / CIP 8149 / NCTC 11857 / SLCC 5334 / V8).